Reading from the N-terminus, the 1110-residue chain is Brother of CDO (1110 aa).

An N-terminal signal peptide occupies residues 1–25 (MTTCRRERPILTLLWILMATAGCLA). At 26-850 (DLNEVPQVTV…MVARASDLPY (825 aa)) the chain is on the extracellular side. Ig-like C2-type domains follow at residues 31 to 118 (PQVT…ATVT), 124 to 208 (DFKL…VKTS), 229 to 310 (PLEA…VILY), and 318 to 402 (PEVT…VQLR). 4 cysteine pairs are disulfide-bonded: Cys-52–Cys-101, Cys-145–Cys-195, Cys-247–Cys-294, and Cys-339–Cys-386. 5 N-linked (GlcNAc...) asparagine glycosylation sites follow: Asn-60, Asn-71, Asn-93, Asn-184, and Asn-270. The tract at residues 407–458 (DTTLRPGRDTKPIAATPPMPPSRPSRPDQMLREQPGLVKPPTSSVQPTSLKC) is disordered. The span at 421–430 (ATPPMPPSRP) shows a compositional bias: pro residues. 3 consecutive Fibronectin type-III domains span residues 469–566 (APII…GRRP), 603–698 (APDR…VVSG), and 707–807 (PVAG…TKAR). N-linked (GlcNAc...) asparagine glycosylation occurs at Asn-512. The disordered stretch occupies residues 561–610 (RTGRRPKPEIVASKEQQIQRDDPGASLQSSSQPDHGRLSPPEAPDRPTIS). N-linked (GlcNAc...) asparagine glycosylation is found at Asn-720 and Asn-754. The tract at residues 809–828 (FSGQPGRPPPLTLAPPQPPP) is disordered. Positions 814–828 (GRPPPLTLAPPQPPP) are enriched in pro residues. A helical membrane pass occupies residues 851–871 (LIVGVVLGSIVLIIVTFIPFC). Residues 872-1110 (LWRAWSKQKH…VSFETPPPTI (239 aa)) are Cytoplasmic-facing. Residues 1065–1110 (SDSCQVGGGDWSSQHPSGTYTGQERGMRFSPSPSVHVSFETPPPTI) form a disordered region. Residues 1075-1086 (WSSQHPSGTYTG) show a composition bias toward polar residues.

In terms of assembly, part of a complex that contains BOC, CDON, NEO1, cadherins and CTNNB1. Interacts with SHH, DHH and IHH. Interacts with NTN3. Interacts with CDH2 and CTNNB1. Interacts with CDH15 only during the early stages of myoblast differentiation. In terms of tissue distribution, highly expressed in embryonic somites, limb buds, dermomyotomes and in the neural tube.

The protein localises to the membrane. Component of a cell-surface receptor complex that mediates cell-cell interactions between muscle precursor cells. Promotes differentiation of myogenic cells. The polypeptide is Brother of CDO (Boc) (Mus musculus (Mouse)).